The following is a 79-amino-acid chain: Acyl carrier protein (79 aa).

The 76-residue stretch at 4–79 (AEIKDKVYDI…QAIDYIVNKK (76 aa)) folds into the Carrier domain. S39 is subject to O-(pantetheine 4'-phosphoryl)serine.

The protein belongs to the acyl carrier protein (ACP) family. 4'-phosphopantetheine is transferred from CoA to a specific serine of apo-ACP by AcpS. This modification is essential for activity because fatty acids are bound in thioester linkage to the sulfhydryl of the prosthetic group.

The protein localises to the cytoplasm. It participates in lipid metabolism; fatty acid biosynthesis. Its function is as follows. Carrier of the growing fatty acid chain in fatty acid biosynthesis. In Pelodictyon phaeoclathratiforme (strain DSM 5477 / BU-1), this protein is Acyl carrier protein.